A 1177-amino-acid polypeptide reads, in one-letter code: Tyrosine-protein kinase hopscotch (1177 aa).

Residues 1–41 (MALANGGEDRMDDSSSGRTSLADSASLTNSSLRSGTSSQSI) are disordered. A compositionally biased stretch (polar residues) spans 16 to 41 (SGRTSLADSASLTNSSLRSGTSSQSI). A phosphoserine mark is found at S40 and S321. An FERM domain is found at 46–414 (GTIRVFNFTT…IYIRLSSKWM (369 aa)). Residues 433–539 (HCHGPIGGAY…YRIPASKYDK (107 aa)) enclose the SH2; atypical domain. 2 consecutive Protein kinase domains span residues 582–843 (YPDS…AEIL) and 892–1164 (YNME…HPTD). ATP is bound by residues 898 to 906 (IGRGHYGTV) and K926. The Proton acceptor role is filled by D1014. Phosphotyrosine; by autocatalysis occurs at positions 1047 and 1048. A disordered region spans residues 1158-1177 (KVTHPTDGHQSPPNQPTDAE).

Belongs to the protein kinase superfamily. Tyr protein kinase family. JAK subfamily. Forms a complex with Hsp83 and piwi; probably Hop mediates the interaction between piwi and Hsp83.

Its subcellular location is the endomembrane system. It catalyses the reaction L-tyrosyl-[protein] + ATP = O-phospho-L-tyrosyl-[protein] + ADP + H(+). Tyrosine kinase of the non-receptor type, phosphorylates the marelle protein. Required maternally for the establishment of the normal array of embryonic segments: involved in the control of pair-rule gene transcription in a stripe-specific manner. Together with Hsp83 and piwi, mediates canalization, also known as developmental robustness, likely via epigenetic silencing of existing genetic variants and suppression of transposon-induced new genetic variation. This Drosophila melanogaster (Fruit fly) protein is Tyrosine-protein kinase hopscotch (hop).